Here is a 449-residue protein sequence, read N- to C-terminus: Adenylyltransferase and sulfurtransferase MOCS3 (449 aa).

ATP-binding positions include glycine 96, aspartate 117, 124-128 (SNLHR), lysine 141, and 185-186 (DN). Zn(2+) contacts are provided by cysteine 227 and cysteine 230. Cysteine 244 (glycyl thioester intermediate; for adenylyltransferase activity) is an active-site residue. Cysteine 302 and cysteine 305 together coordinate Zn(2+). In terms of domain architecture, Rhodanese spans 351-447 (QDKPHLLLDV…WTNQIDENFP (97 aa)). Cysteine 406 serves as the catalytic Cysteine persulfide intermediate; for sulfurtransferase activity.

The protein in the N-terminal section; belongs to the HesA/MoeB/ThiF family. UBA4 subfamily. The cofactor is Zn(2+).

It localises to the cytoplasm. The protein resides in the cytosol. The catalysed reaction is [molybdopterin-synthase sulfur-carrier protein]-C-terminal Gly-Gly + ATP + H(+) = [molybdopterin-synthase sulfur-carrier protein]-C-terminal Gly-Gly-AMP + diphosphate. It catalyses the reaction [molybdopterin-synthase sulfur-carrier protein]-C-terminal Gly-Gly-AMP + S-sulfanyl-L-cysteinyl-[cysteine desulfurase] + AH2 = [molybdopterin-synthase sulfur-carrier protein]-C-terminal-Gly-aminoethanethioate + L-cysteinyl-[cysteine desulfurase] + A + AMP + 2 H(+). The protein operates within tRNA modification; 5-methoxycarbonylmethyl-2-thiouridine-tRNA biosynthesis. It functions in the pathway cofactor biosynthesis; molybdopterin biosynthesis. In terms of biological role, plays a central role in 2-thiolation of mcm(5)S(2)U at tRNA wobble positions of cytosolic tRNA(Lys), tRNA(Glu) and tRNA(Gln). Also essential during biosynthesis of the molybdenum cofactor. Acts by mediating the C-terminal thiocarboxylation of sulfur carriers URM1 and MOCS2A. Its N-terminus first activates URM1 and MOCS2A as acyl-adenylates (-COAMP), then the persulfide sulfur on the catalytic cysteine is transferred to URM1 and MOCS2A to form thiocarboxylation (-COSH) of their C-terminus. The reaction probably involves hydrogen sulfide that is generated from the persulfide intermediate and that acts as a nucleophile towards URM1 and MOCS2A. Subsequently, a transient disulfide bond is formed. Does not use thiosulfate as sulfur donor; NFS1 probably acting as a sulfur donor for thiocarboxylation reactions. The chain is Adenylyltransferase and sulfurtransferase MOCS3 from Drosophila grimshawi (Hawaiian fruit fly).